Here is a 59-residue protein sequence, read N- to C-terminus: MAKLKITLVRSLIGRPEAQRKVVRALGLGKTNSMVEQNDSPIIRGMINKVAHLVKVEEA.

It belongs to the universal ribosomal protein uL30 family. Part of the 50S ribosomal subunit.

The protein is Large ribosomal subunit protein uL30 of Desulforamulus reducens (strain ATCC BAA-1160 / DSM 100696 / MI-1) (Desulfotomaculum reducens).